The primary structure comprises 146 residues: DNA utilization protein HofO (146 aa).

The helical transmembrane segment at 20–37 (WAFWLLMLVTLIFLSSTH) threads the bilayer.

It is found in the cell inner membrane. In terms of biological role, required for the use of extracellular DNA as a nutrient. The chain is DNA utilization protein HofO (hofO) from Escherichia coli (strain K12).